The following is a 54-amino-acid chain: Large ribosomal subunit protein bL33 (54 aa).

This sequence belongs to the bacterial ribosomal protein bL33 family.

This is Large ribosomal subunit protein bL33 from Thermobifida fusca (strain YX).